A 759-amino-acid polypeptide reads, in one-letter code: Nucleolar RNA helicase 2-A (759 aa).

Positions 1–154 (MPVKVYAEEM…KKRKTDTTEI (154 aa)) are disordered. A compositionally biased stretch (acidic residues) spans 77–86 (ETAEECDGEQ). The Q motif signature appears at 179 to 207 (GDFSKFPLSKETIKNLQAKGVSYLFPIQS). One can recognise a Helicase ATP-binding domain in the interval 210–389 (FHTAYSGKDV…KKYMRKQFEK (180 aa)). 223–230 (ARTGTGKT) provides a ligand contact to ATP. The DEAD box motif lies at 332–335 (DEVD). The region spanning 422–566 (DLVQVYSGSH…VGVPSLLNVA (145 aa)) is the Helicase C-terminal domain. Residues 709–759 (QESERNFDGPRNRGFGGRGRRPFDRRNNSRNSNRGGGGRGRNRNGGFRRGR) form a disordered region. The span at 710-719 (ESERNFDGPR) shows a compositional bias: basic and acidic residues. The span at 748-759 (GRNRNGGFRRGR) shows a compositional bias: basic residues.

It belongs to the DEAD box helicase family. DDX21/DDX50 subfamily. In terms of tissue distribution, widely expressed. Expressed at higher level in stomach. Expressed at higher level compared to ddx21-b.

Its subcellular location is the nucleus. It localises to the nucleolus. The protein resides in the nucleoplasm. It is found in the cytoplasm. The protein localises to the cytosol. Its subcellular location is the mitochondrion. The catalysed reaction is ATP + H2O = ADP + phosphate + H(+). In terms of biological role, RNA helicase that acts as a sensor of the transcriptional status of both RNA polymerase (Pol) I and II: promotes ribosomal RNA (rRNA) processing and transcription from polymerase II (Pol II). Binds various RNAs, such as rRNAs, snoRNAs, 7SK and, at lower extent, mRNAs. In the nucleolus, localizes to rDNA locus, where it directly binds rRNAs and snoRNAs, and promotes rRNA transcription, processing and modification. Required for rRNA 2'-O-methylation, possibly by promoting the recruitment of late-acting snoRNAs SNORD56 and SNORD58 with pre-ribosomal complexes. In the nucleoplasm, binds 7SK RNA and is recruited to the promoters of Pol II-transcribed genes: acts by facilitating the release of P-TEFb from inhibitory 7SK snRNP in a manner that is dependent on its helicase activity, thereby promoting transcription of its target genes. Required to prevent R-loop-associated DNA damage and transcription-associated genomic instability. The sequence is that of Nucleolar RNA helicase 2-A (ddx21-a) from Xenopus laevis (African clawed frog).